Consider the following 142-residue polypeptide: Hemoglobin subunit alpha (142 aa).

Residues 2–142 form the Globin domain; sequence VLSPADKTNV…VSTVLTSKYR (141 aa). At Ser4 the chain carries Phosphoserine. Lys8 is subject to N6-succinyllysine. Thr9 is subject to Phosphothreonine. Lys12 is subject to N6-succinyllysine. Lys17 bears the N6-acetyllysine; alternate mark. The residue at position 17 (Lys17) is an N6-succinyllysine; alternate. A Phosphotyrosine modification is found at Tyr25. Phosphoserine is present on Ser36. Lys41 bears the N6-succinyllysine mark. Position 50 is a phosphoserine (Ser50). His59 contributes to the O2 binding site. His88 is a binding site for heme b. Ser103 is modified (phosphoserine). Thr109 is modified (phosphothreonine). Phosphoserine is present on Ser125. 2 positions are modified to phosphothreonine: Thr135 and Thr138. Ser139 carries the post-translational modification Phosphoserine.

Belongs to the globin family. As to quaternary structure, heterotetramer of two alpha chains and two beta chains. As to expression, red blood cells.

Involved in oxygen transport from the lung to the various peripheral tissues. Functionally, hemopressin acts as an antagonist peptide of the cannabinoid receptor CNR1. Hemopressin-binding efficiently blocks cannabinoid receptor CNR1 and subsequent signaling. In Ailurus fulgens (Himalayan red panda), this protein is Hemoglobin subunit alpha (HBA).